A 303-amino-acid polypeptide reads, in one-letter code: Caspase-7 (303 aa).

Residues 1-21 (MADDQGCIEEQGVEDSANEDS) show a composition bias toward acidic residues. Residues 1-30 (MADDQGCIEEQGVEDSANEDSVDAKPDRSS) form a disordered region. N-acetylalanine is present on alanine 2. Residues 2–23 (ADDQGCIEEQGVEDSANEDSVD) constitute a propeptide, N-terminally processed. Serine 30 bears the Phosphoserine; by PAK2 mark. The residue at position 37 (serine 37) is a Phosphoserine. An exosite region spans residues 38–41 (KKKK). The segment at 76-87 (KNFDKVTGMGVR) is loop L1. Histidine 144 is a catalytic residue. At threonine 173 the chain carries Phosphothreonine; by PAK2. The active site involves cysteine 186. Residues 187–196 (RGTELDDGIQ) form a loop L2 region. Residues 199-206 (SGPINDTD) constitute a propeptide that is removed on maturation. The tract at residues 226–238 (VPGYYSWRSPGRG) is loop L3. A (Microbial infection) ADP-riboxanated arginine modification is found at arginine 233. A Phosphoserine; by PAK2 modification is found at serine 239. Positions 274-288 (ESQSDDPHFHEKKQI) are loop L4.

It belongs to the peptidase C14A family. In terms of assembly, heterotetramer that consists of two anti-parallel arranged heterodimers, each one formed by a 20 kDa (p20) and a 11 kDa (p11) subunit. Interacts with XIAP (via its second BIR domain); inhibiting CASP7 activity. Interacts with BIRC6/bruce. Interacts with ATXN3 (short isoform 1). Interacts with HSPA5. Post-translationally, cleavage by different proteases, such as granzyme B (GZMB), caspase-1 (CASP1), caspase-8 (CASP8), caspase-9 (CASP9) or caspase-10 (CASP10) generate the two active subunits. Its involvement in different programmed cell death processes is probably specified by the protease that activates CASP7. Cleaved and activated by initiator caspases (CASP8, CASP9 and/or CASP10), leading to execution phase of apoptosis. Cleavage and maturation by GZMB regulates granzyme-mediated programmed cell death. Cleaved and activated by CASP1 in response to bacterial infection. Propeptide domains can also be cleaved efficiently by CASP3. Active heterodimers between the small subunit of caspase-7 and the large subunit of CASP3, and vice versa, also occur. Also cleaved at the N-terminus at alternative sites by CAPN1, leading to its activation. In terms of processing, phosphorylation at Ser-30 and Ser-239 by PAK2 inhibits its activity. Phosphorylation at Ser-30 prevents cleavage and activation by initiator caspase CASP9, while phosphorylation at Ser-239 prevents thiol protease activity by preventing substrate-binding. (Microbial infection) ADP-riboxanation by C.violaceum CopC blocks CASP7 processing, preventing CASP7 activation and ability to recognize and cleave substrates. Post-translationally, ubiquitinated by BIRC6; this activity is inhibited by DIABLO/SMAC. As to expression, highly expressed in lung, skeletal muscle, liver, kidney, spleen and heart, and moderately in testis. No expression in the brain.

The protein resides in the cytoplasm. Its subcellular location is the cytosol. The protein localises to the nucleus. It localises to the secreted. It is found in the extracellular space. The enzyme catalyses Strict requirement for an Asp residue at position P1 and has a preferred cleavage sequence of Asp-Glu-Val-Asp-|-.. During activation, the N-terminal disordered prodomain is removed by cleavage. Concomitantly, double cleavage gives rise to a large Caspase-7 subunit p20 and a small Caspase-7 subunit p11. The two large and two small subunits then assemble to form the active CASP7 complex. Can be cleaved and activated by different caspases, depending on the context. Cleaved and activated by initiator caspases (CASP8, CASP9 and/or CASP10), leading to execution phase of apoptosis. Inhibited by XIAP, which directly binds to the active site pocket and obstructs substrate entry. Cleavage and maturation by GZMB regulates granzyme-mediated programmed cell death. Cleavage and maturation by CASP1 regulates pyroptosis. Phosphorylation at Ser-30 and Ser-239 by PAK2 inhibits its activity. Inhibited by isatin sulfonamides. Inhibited by 2-(2,4-Dichlorophenoxy)- N-(2-mercapto-ethyl)-acetamide (DICA) and 5-Fluoro-1H-indole-2- carboxylic acid (2-mercapto-ethyl)-amide (FICA) allosteric inhibitors, which disrupt an interaction between Arg-187 and Tyr-223. Specifically inhibited by DARPin D7.18 and D7.43, which specifically bind to the precursor CASP7 and prevent its processing and activation. Inhibited by BIRC6; following inhibition of BIRC6-caspase binding by DIABLO/SMAC, BIRC6 is subjected to caspase cleavage, leading to an increase in active caspases. Its function is as follows. Thiol protease involved in different programmed cell death processes, such as apoptosis, pyroptosis or granzyme-mediated programmed cell death, by proteolytically cleaving target proteins. Has a marked preference for Asp-Glu-Val-Asp (DEVD) consensus sequences, with some plasticity for alternate non-canonical sequences. Its involvement in the different programmed cell death processes is probably determined by upstream proteases that activate CASP7. Acts as an effector caspase involved in the execution phase of apoptosis: following cleavage and activation by initiator caspases (CASP8, CASP9 and/or CASP10), mediates execution of apoptosis by catalyzing cleavage of proteins, such as CLSPN, PARP1, PTGES3 and YY1. Compared to CASP3, acts as a minor executioner caspase and cleaves a limited set of target proteins. Acts as a key regulator of the inflammatory response in response to bacterial infection by catalyzing cleavage and activation of the sphingomyelin phosphodiesterase SMPD1 in the extracellular milieu, thereby promoting membrane repair. Regulates pyroptosis in intestinal epithelial cells: cleaved and activated by CASP1 in response to S.typhimurium infection, promoting its secretion to the extracellular milieu, where it catalyzes activation of SMPD1, generating ceramides that repair membranes and counteract the action of gasdermin-D (GSDMD) pores. Regulates granzyme-mediated programmed cell death in hepatocytes: cleaved and activated by granzyme B (GZMB) in response to bacterial infection, promoting its secretion to the extracellular milieu, where it catalyzes activation of SMPD1, generating ceramides that repair membranes and counteract the action of perforin (PRF1) pores. Following cleavage by CASP1 in response to inflammasome activation, catalyzes processing and inactivation of PARP1, alleviating the transcription repressor activity of PARP1. Acts as an inhibitor of type I interferon production during virus-induced apoptosis by mediating cleavage of antiviral proteins CGAS, IRF3 and MAVS, thereby preventing cytokine overproduction. Cleaves and activates sterol regulatory element binding proteins (SREBPs). Cleaves phospholipid scramblase proteins XKR4, XKR8 and XKR9. In case of infection, catalyzes cleavage of Kaposi sarcoma-associated herpesvirus protein ORF57, thereby preventing expression of viral lytic genes. Cleaves BIRC6 following inhibition of BIRC6-caspase binding by DIABLO/SMAC. Lacks enzymatic activity. The chain is Caspase-7 from Homo sapiens (Human).